The following is a 163-amino-acid chain: Phosphopantetheine adenylyltransferase (163 aa).

T10 lines the substrate pocket. Residues 10-11 (TF) and H18 contribute to the ATP site. Substrate contacts are provided by K42, L74, and R88. ATP contacts are provided by residues 89-91 (GLR), E99, and 124-130 (NSFISST).

Belongs to the bacterial CoaD family. Homohexamer. Requires Mg(2+) as cofactor.

It localises to the cytoplasm. The enzyme catalyses (R)-4'-phosphopantetheine + ATP + H(+) = 3'-dephospho-CoA + diphosphate. The protein operates within cofactor biosynthesis; coenzyme A biosynthesis; CoA from (R)-pantothenate: step 4/5. Reversibly transfers an adenylyl group from ATP to 4'-phosphopantetheine, yielding dephospho-CoA (dPCoA) and pyrophosphate. This chain is Phosphopantetheine adenylyltransferase, found in Shewanella oneidensis (strain ATCC 700550 / JCM 31522 / CIP 106686 / LMG 19005 / NCIMB 14063 / MR-1).